Here is a 737-residue protein sequence, read N- to C-terminus: MWLLLLLLSGLSRLGGLSEPQTEGTREKLHVQVTVPEKIRSITSEGYETQVTYSLKIEGKTYILNLMQKAFLPPNFRVYSYDSTGIMRPLEQKFQNICYFQGYIEGYPNSMVIVSTCTGLRGVLQFGNVSYGIEPLESSSGFEHVIYQVEPKKGDTLLYAEKDMDLRDPQYKIRSIKPQRTVSHYLEIHIVVEKQMFEHIGADTAVVTQKIFQLIGLTNAIFAPFNLTVILSSLEFWMDENKISTTGDANKLLYRFLKWKQSYLVLRPHDMAFLLVYRDTTDYVGATYQGKMCDKNYAGGVALHPKAVTLESLAIILVQLLSLSMGVAYDDVNTCQCGVPICVMNPEALHSSGVRSFSNCSMEDFSKFIVSQSSHCLQNQPHLQPSYKMAVCGNGELEEGEVCDCGQEGCDDKPPPCCNPTTCQLSEGSTCSTGSCCDASCNLKAKGELCRPANQECDVTEYCNGTSEVCEEDFFVQDGHPCAEQKWICINGTCQSGAQQCRDLFGTDADYGTKECYSELNSKSDISGSCGITPTGYKDCAPNDRMCGKLICIYQSEDILKMRSAIVIYANISGQICISLEYPPGHKESKKMCVRDGTVCGSGKVCLNQECVEDTFLNYDCTPEKCNHHGVCNNKKHCHCEPTYLPPDCKNTEDTWPGGSVDSGNQQRAESIPARSYVASAYRSKSARWPFFLIIPFYVVILVLIGMLVKVYSQRKKWRMDDFSSEEQFESESESKD.

An N-terminal signal peptide occupies residues 1-18; that stretch reads MWLLLLLLSGLSRLGGLS. A propeptide spanning residues 19–180 is cleaved from the precursor; the sequence is EPQTEGTREK…YKIRSIKPQR (162 aa). At 19–688 the chain is on the extracellular side; it reads EPQTEGTREK…ASAYRSKSAR (670 aa). 2 N-linked (GlcNAc...) asparagine glycosylation sites follow: N128 and N226. In terms of domain architecture, Peptidase M12B spans 184-381; it reads HYLEIHIVVE…QSSHCLQNQP (198 aa). Intrachain disulfides connect C293/C376, C335/C360, C337/C342, and C450/C470. N-linked (GlcNAc...) asparagine glycans are attached at residues N359, N464, N491, and N571. The region spanning 389–478 is the Disintegrin domain; it reads MAVCGNGELE…VCEEDFFVQD (90 aa). Residues 617 to 650 enclose the EGF-like domain; the sequence is LNYDCTPEKCNHHGVCNNKKHCHCEPTYLPPDCK. 3 cysteine pairs are disulfide-bonded: C621-C632, C626-C638, and C640-C649. The helical transmembrane segment at 689–709 threads the bilayer; sequence WPFFLIIPFYVVILVLIGMLV. Over 710 to 737 the chain is Cytoplasmic; that stretch reads KVYSQRKKWRMDDFSSEEQFESESESKD. S731 carries the post-translational modification Phosphoserine.

Heterodimer with ADAM1/fertilin subunit alpha. The prodomain and the metalloprotease domain are cleaved during the epididymal maturation of the spermatozoa.

The protein localises to the membrane. Functionally, sperm surface membrane protein that may be involved in sperm-egg plasma membrane adhesion and fusion during fertilization. Could have a direct role in sperm-zona binding or migration of sperm from the uterus into the oviduct. Interactions with egg membrane could be mediated via binding between its disintegrin-like domain to one or more integrins receptors on the egg. This is a non catalytic metalloprotease-like protein. The polypeptide is Disintegrin and metalloproteinase domain-containing protein 2 (Adam2) (Rattus norvegicus (Rat)).